Here is a 348-residue protein sequence, read N- to C-terminus: Major outer membrane protein (348 aa).

A signal peptide spans 1-20 (MKKTIVALAVAAVAATSANA).

As to quaternary structure, disulfide bond interactions within and between MOMP molecules and other components form high molecular-weight oligomers.

Its subcellular location is the cell outer membrane. Structural rigidity of the outer membrane of elementary bodies and porin forming, permitting diffusion of solutes through the intracellular reticulate body membrane. The chain is Major outer membrane protein (ompH) from Pasteurella multocida (strain Pm70).